A 79-amino-acid chain; its full sequence is Small ribosomal subunit protein bS18 (79 aa).

This sequence belongs to the bacterial ribosomal protein bS18 family. Part of the 30S ribosomal subunit. Forms a tight heterodimer with protein bS6.

Binds as a heterodimer with protein bS6 to the central domain of the 16S rRNA, where it helps stabilize the platform of the 30S subunit. This chain is Small ribosomal subunit protein bS18, found in Renibacterium salmoninarum (strain ATCC 33209 / DSM 20767 / JCM 11484 / NBRC 15589 / NCIMB 2235).